The following is a 489-amino-acid chain: Glycogen synthase (489 aa).

Arg-20 lines the ADP-alpha-D-glucose pocket.

It belongs to the glycosyltransferase 1 family. Bacterial/plant glycogen synthase subfamily.

The catalysed reaction is [(1-&gt;4)-alpha-D-glucosyl](n) + ADP-alpha-D-glucose = [(1-&gt;4)-alpha-D-glucosyl](n+1) + ADP + H(+). Its pathway is glycan biosynthesis; glycogen biosynthesis. Synthesizes alpha-1,4-glucan chains using ADP-glucose. The protein is Glycogen synthase of Chlorobium luteolum (strain DSM 273 / BCRC 81028 / 2530) (Pelodictyon luteolum).